Consider the following 542-residue polypeptide: Membrane protein insertase YidC (542 aa).

Helical transmembrane passes span 6–26 (NILL…WQTD), 326–346 (LVVD…LLMF), 350–370 (FVGN…GMLY), 421–441 (GGCL…WVLL), 458–478 (LSVQ…MFLM), and 501–521 (VIFT…WLVG).

This sequence belongs to the OXA1/ALB3/YidC family. Type 1 subfamily. Interacts with the Sec translocase complex via SecD. Specifically interacts with transmembrane segments of nascent integral membrane proteins during membrane integration.

It is found in the cell inner membrane. Its function is as follows. Required for the insertion and/or proper folding and/or complex formation of integral membrane proteins into the membrane. Involved in integration of membrane proteins that insert both dependently and independently of the Sec translocase complex, as well as at least some lipoproteins. Aids folding of multispanning membrane proteins. This is Membrane protein insertase YidC from Shewanella loihica (strain ATCC BAA-1088 / PV-4).